The primary structure comprises 140 residues: Cytochrome b (140 aa).

A helical transmembrane segment spans residues F38–I58. H42 and H56 together coordinate heme b. Position 61 (H61) interacts with a ubiquinone. Residues F85–F105 traverse the membrane as a helical segment.

The protein belongs to the cytochrome b family. In terms of assembly, fungal cytochrome b-c1 complex contains 10 subunits; 3 respiratory subunits, 2 core proteins and 5 low-molecular weight proteins. Cytochrome b-c1 complex is a homodimer. Heme b is required as a cofactor.

It localises to the mitochondrion inner membrane. Component of the ubiquinol-cytochrome c reductase complex (complex III or cytochrome b-c1 complex) that is part of the mitochondrial respiratory chain. The b-c1 complex mediates electron transfer from ubiquinol to cytochrome c. Contributes to the generation of a proton gradient across the mitochondrial membrane that is then used for ATP synthesis. The polypeptide is Cytochrome b (cob) (Aspergillus terreus).